Consider the following 345-residue polypeptide: tRNA-dihydrouridine(20/20a) synthase (345 aa).

Residues 32 to 34 and Gln84 each bind FMN; that span reads PML. Catalysis depends on Cys114, which acts as the Proton donor. Residues Lys153, His186, 226–228, and 248–249 each bind FMN; these read NGG and GR.

This sequence belongs to the Dus family. DusA subfamily. Requires FMN as cofactor.

It carries out the reaction 5,6-dihydrouridine(20) in tRNA + NADP(+) = uridine(20) in tRNA + NADPH + H(+). The enzyme catalyses 5,6-dihydrouridine(20) in tRNA + NAD(+) = uridine(20) in tRNA + NADH + H(+). It catalyses the reaction 5,6-dihydrouridine(20a) in tRNA + NADP(+) = uridine(20a) in tRNA + NADPH + H(+). The catalysed reaction is 5,6-dihydrouridine(20a) in tRNA + NAD(+) = uridine(20a) in tRNA + NADH + H(+). In terms of biological role, catalyzes the synthesis of 5,6-dihydrouridine (D), a modified base found in the D-loop of most tRNAs, via the reduction of the C5-C6 double bond in target uridines. Specifically modifies U20 and U20a in tRNAs. In Escherichia coli O157:H7, this protein is tRNA-dihydrouridine(20/20a) synthase.